The sequence spans 243 residues: Hydroxyacylglutathione hydrolase (243 aa).

Zn(2+) is bound by residues His52, His54, Asp56, His57, His108, Asp125, and His163.

It belongs to the metallo-beta-lactamase superfamily. Glyoxalase II family. In terms of assembly, monomer. The cofactor is Zn(2+).

The catalysed reaction is an S-(2-hydroxyacyl)glutathione + H2O = a 2-hydroxy carboxylate + glutathione + H(+). Its pathway is secondary metabolite metabolism; methylglyoxal degradation; (R)-lactate from methylglyoxal: step 2/2. Its function is as follows. Thiolesterase that catalyzes the hydrolysis of S-D-lactoyl-glutathione to form glutathione and D-lactic acid. The polypeptide is Hydroxyacylglutathione hydrolase (Haemophilus influenzae (strain PittGG)).